Consider the following 177-residue polypeptide: Hypoxanthine phosphoribosyltransferase (177 aa).

Arg43 and Gly44 together coordinate diphosphate. Glu99 serves as a coordination point for GMP. Residue Glu99 coordinates IMP. Mg(2+) is bound by residues Glu99 and Asp100. Asp103 functions as the Proton acceptor in the catalytic mechanism. Residues 103 to 108, Lys131, and Asp159 each bind GMP; that span reads DSGKTL. IMP-binding positions include 103 to 108 and Lys131; that span reads DSGKTL. Diphosphate is bound at residue Arg165.

It belongs to the purine/pyrimidine phosphoribosyltransferase family. In terms of assembly, homotetramer. Mg(2+) serves as cofactor.

It is found in the cytoplasm. It catalyses the reaction IMP + diphosphate = hypoxanthine + 5-phospho-alpha-D-ribose 1-diphosphate. The enzyme catalyses GMP + diphosphate = guanine + 5-phospho-alpha-D-ribose 1-diphosphate. It participates in purine metabolism; IMP biosynthesis via salvage pathway; IMP from hypoxanthine: step 1/1. In terms of biological role, purine salvage pathway enzyme which catalyzes the transfer of the ribosyl-5-phosphate group from 5-phospho-alpha-D-ribose 1-diphosphate (PRPP) to the N9 position of hypoxanthine to yield IMP (inosine 5'-monophosphate). To a lesser extent, can also act on guanine leading to GMP, but shows a highly less efficient activity with xanthine. This chain is Hypoxanthine phosphoribosyltransferase (hpt), found in Buchnera aphidicola subsp. Schizaphis graminum (strain Sg).